The sequence spans 283 residues: Interferon alpha-inducible protein 27-like protein 2B (283 aa).

Residues 1–90 (MKRKFVGAAI…AVGTATGARA (90 aa)) constitute a mitochondrion transit peptide. Residues 90–120 (AEGSMGASREQESGPQDPPQELQEPQEPPSC) form a disordered region. 3 helical membrane passes run 130–150 (FVGA…ALSA), 176–196 (GGGI…ILGL), and 202–222 (IILG…MGAC). The tract at residues 227–283 (PGLQDLQQEPKEPQEPQELQKQQEPQEPQELQKQQETQETQETQELQKTQEPPSYEK) is disordered. Over residues 242 to 283 (PQELQKQQEPQEPQELQKQQETQETQETQELQKTQEPPSYEK) the composition is skewed to low complexity.

It belongs to the IFI6/IFI27 family. Homooligomer. Interacts with BAK1. Interacts with BAX. Interacts with adenine nucleotide translocase.

It is found in the mitochondrion inner membrane. Its function is as follows. Functions in the intrinsic apoptotic signaling pathway and may have an interferon-induced antiviral activity. The sequence is that of Interferon alpha-inducible protein 27-like protein 2B from Mus musculus (Mouse).